The sequence spans 1226 residues: DNA-directed RNA polymerase subunit beta (1226 aa).

Belongs to the RNA polymerase beta chain family. The RNAP catalytic core consists of 2 alpha, 1 beta, 1 beta' and 1 omega subunit. When a sigma factor is associated with the core the holoenzyme is formed, which can initiate transcription.

The enzyme catalyses RNA(n) + a ribonucleoside 5'-triphosphate = RNA(n+1) + diphosphate. Its function is as follows. DNA-dependent RNA polymerase catalyzes the transcription of DNA into RNA using the four ribonucleoside triphosphates as substrates. In Leptospira interrogans serogroup Icterohaemorrhagiae serovar Lai (strain 56601), this protein is DNA-directed RNA polymerase subunit beta.